The primary structure comprises 369 residues: Putative F-box/kelch-repeat protein At4g39760 (369 aa).

In terms of domain architecture, F-box spans 14-60 (SLSFSSLPHEIVVSCLARVSGSYYPKLCLVSKQFRSIILSNEIYKAR). Kelch repeat units lie at residues 131 to 177 (ETYI…GQYP), 178 to 224 (NIYV…KMKM), and 228 to 274 (NVYV…KNCW).

This chain is Putative F-box/kelch-repeat protein At4g39760, found in Arabidopsis thaliana (Mouse-ear cress).